A 240-amino-acid chain; its full sequence is Uridylate kinase (240 aa).

13-16 (KFSG) is a binding site for ATP. G55 contacts UMP. ATP contacts are provided by G56 and R60. UMP is bound by residues D76 and 137–144 (TGNPFFTT). ATP-binding residues include T164, Y170, and D173.

Belongs to the UMP kinase family. In terms of assembly, homohexamer.

The protein resides in the cytoplasm. It carries out the reaction UMP + ATP = UDP + ADP. Its pathway is pyrimidine metabolism; CTP biosynthesis via de novo pathway; UDP from UMP (UMPK route): step 1/1. With respect to regulation, inhibited by UTP. In terms of biological role, catalyzes the reversible phosphorylation of UMP to UDP. This is Uridylate kinase from Helicobacter acinonychis (strain Sheeba).